The sequence spans 462 residues: Probable threonine/serine transporter YbxG (462 aa).

A run of 12 helical transmembrane segments spans residues 17–37 (MIAL…STIS), 38–58 (WTGP…FFIM), 89–109 (ITAW…IIAV), 121–141 (PAWI…LISV), 154–174 (IKIV…FFGF), 190–210 (GGFF…VIAA), 238–258 (IIWR…TVYP), 276–296 (IGIT…AMSG), 331–351 (LYGT…NYIA), 355–375 (IFVY…FIIL), 398–418 (FAPF…VGMW), and 427–447 (LIVG…FGIG).

The protein belongs to the amino acid-polyamine-organocation (APC) superfamily.

The protein resides in the cell membrane. Functionally, probable threonine transporter. Is also active as a minor serine permease. This chain is Probable threonine/serine transporter YbxG (ybxG), found in Bacillus subtilis (strain 168).